The chain runs to 434 residues: Glutamyl-tRNA reductase (434 aa).

Residues 49–52, S107, 112–114, and Q118 each bind substrate; these read TCNR and EPQ. The active-site Nucleophile is C50. 187-192 lines the NADP(+) pocket; sequence GAGETV.

This sequence belongs to the glutamyl-tRNA reductase family. In terms of assembly, homodimer.

It catalyses the reaction (S)-4-amino-5-oxopentanoate + tRNA(Glu) + NADP(+) = L-glutamyl-tRNA(Glu) + NADPH + H(+). It functions in the pathway porphyrin-containing compound metabolism; protoporphyrin-IX biosynthesis; 5-aminolevulinate from L-glutamyl-tRNA(Glu): step 1/2. In terms of biological role, catalyzes the NADPH-dependent reduction of glutamyl-tRNA(Glu) to glutamate 1-semialdehyde (GSA). In Hydrogenovibrio crunogenus (strain DSM 25203 / XCL-2) (Thiomicrospira crunogena), this protein is Glutamyl-tRNA reductase.